A 620-amino-acid chain; its full sequence is Protein VERNALIZATION INSENSITIVE 3 (620 aa).

The PHD-type zinc-finger motif lies at 148-206 (RCSCCICQKFDDNKDPSLWLTCDACGSSCHLECGLKQDRYGIGSDDLDGRFYCAYCGKD). The Nuclear localization signal signature appears at 213–220 (WRKQVKVA). Residues 314 to 412 (DKMTVRVEEI…ELRFTTLKDD (99 aa)) enclose the Fibronectin type-III domain. The interval 411–466 (DDGDEAGDQQSPLTNSSSGLCSNPSLPEDESNNVNKSCSKGNGDKDNTEHCSAGEV) is disordered. Positions 418 to 435 (DQQSPLTNSSSGLCSNPS) are enriched in polar residues. The Nuclear localization signal motif lies at 493-500 (CKRDIYKG). Positions 512–620 (TVSLNEKPEI…PAGICLKLWH (109 aa)) are VIN3-Interacting Domain (VID).

In terms of assembly, interacts with VIL1 and VIL2. The heterodimer made of VIN3 and VIL1 is required for establishing the vernalization-induced epigenetic silencing of FLC. Component of the plant homeodomain / polycomb repressive complex 2 (PHD-PRC2) large complex during prolonged cold, composed of core PRC2 components (VRN2, EZA1, FIE and MSI1), and three related PHD finger proteins (VIL1, VIL2 and VIN3) that mediates histone H3 trimethylation on 'Lys-27' (H3K27me3). In terms of tissue distribution, expressed in shoot and root apices. Displays the same pattern of expression as FLC.

The protein localises to the nucleus. Its subcellular location is the nucleus speckle. Plays a central role in vernalization by mediating the initial transcriptional repression of the homeotic gene FLC, a floral repressor, after a cold treatment. However, due to its transient expression, it cannot maintain repression of FLC, which is then maintained by Polycomb Group complexes containing VRN2 throughout development. Required to deacetylate histones on the FLC promoter. Together with VIL1, required during vernalization for the modifications of FLC and FLM chromatin that are associated with an epigenetically silenced state (e.g. chromatin modifications, histone deacetylation, and trimethylated H3 'Lys-4' H3K4me3 and 'Lys-27' H3K27me3) and with acquisition of competence to flower. The sequence is that of Protein VERNALIZATION INSENSITIVE 3 (VIN3) from Arabidopsis thaliana (Mouse-ear cress).